Consider the following 377-residue polypeptide: tRNA-specific 2-thiouridylase MnmA (377 aa).

Residues 22–29 (GMSGGVDS) and M48 contribute to the ATP site. Residues 108–110 (NPD) are interaction with target base in tRNA. The Nucleophile role is filled by C113. C113 and C210 are disulfide-bonded. G138 serves as a coordination point for ATP. The interaction with tRNA stretch occupies residues 160-162 (KDQ). The active-site Cysteine persulfide intermediate is the C210. Residues 322 to 323 (RY) are interaction with tRNA.

Belongs to the MnmA/TRMU family.

It localises to the cytoplasm. It carries out the reaction S-sulfanyl-L-cysteinyl-[protein] + uridine(34) in tRNA + AH2 + ATP = 2-thiouridine(34) in tRNA + L-cysteinyl-[protein] + A + AMP + diphosphate + H(+). Catalyzes the 2-thiolation of uridine at the wobble position (U34) of tRNA, leading to the formation of s(2)U34. In Shewanella amazonensis (strain ATCC BAA-1098 / SB2B), this protein is tRNA-specific 2-thiouridylase MnmA.